The following is a 263-amino-acid chain: Small ribosomal subunit protein eS4 (263 aa).

The S4 RNA-binding domain occupies 42-104 (LPLIVFLRNR…TGEHFRLVYD (63 aa)).

This sequence belongs to the eukaryotic ribosomal protein eS4 family.

The protein is Small ribosomal subunit protein eS4 (RPS4Y1) of Gorilla gorilla gorilla (Western lowland gorilla).